The primary structure comprises 436 residues: MMGEAAVAAGPCPLREDSFTRFSSQSNVYGLAGGAGGRGELLAATLKGKVLGFRYQDLRQKIRPVAKELQFNYIPVDAEIVSIDTFNKSPPKRGLVVGITFIKDSGDKGSPFLNIYCDYEPGSEYNLDSIAQSCLNLELQFTPFQLCHAEVQVGDQLETVFLLSGNDPAIHLYKENEGLHQFEEQPVENLFPELTNLTSSVLWLDVHNFPGTSRRLSALGCQSGYVRVAHVDQRSREVLQMWSVLQDGPISRVIVFSLSAAKETKDRPLQDEYSVLVASMLEPAVVYRDLLNRGLEDQLLLPGSDQFDSVLCSLVTDVDLDGRPEVLVATYGQELLCYKYRGPESGLPEAQHGFHLLWQRSFSSPLLAMAHVDLTGDGLQELAVVSLKGVHILQHSLIQASELVLTRLRHQVEQRRRRLQGLEDGAGAGPAENAAS.

The residue at position 1 (Met1) is an N-acetylmethionine.

Part of the KICSTOR complex composed of KPTN, ITFG2, KICS2 and SZT2. SZT2 probably serves as a link between the other three proteins in the KICSTOR complex and mediates the direct interaction with the GATOR1 complex. May associate with F-actin filaments.

It localises to the lysosome membrane. Its subcellular location is the cell projection. The protein resides in the lamellipodium. The protein localises to the stereocilium. In terms of biological role, as part of the KICSTOR complex functions in the amino acid-sensing branch of the TORC1 signaling pathway. Recruits, in an amino acid-independent manner, the GATOR1 complex to the lysosomal membranes and allows its interaction with GATOR2 and the RAG GTPases. Functions upstream of the RAG GTPases and is required to negatively regulate mTORC1 signaling in absence of amino acids. In absence of the KICSTOR complex mTORC1 is constitutively localized to the lysosome and activated. The KICSTOR complex is also probably involved in the regulation of mTORC1 by glucose. This is KICSTOR complex protein kaptin from Homo sapiens (Human).